Consider the following 105-residue polypeptide: Pyruvate synthase subunit PorD (105 aa).

2 4Fe-4S ferredoxin-type domains span residues 44-73 (FRPE…LDEE) and 74-103 (GYPV…MVRE). [4Fe-4S] cluster-binding residues include Cys53, Cys56, Cys59, Cys63, Cys83, Cys86, Cys89, and Cys93.

As to quaternary structure, heterotetramer of one alpha, one beta, one delta and one gamma chain. The cofactor is [4Fe-4S] cluster.

This Pyrococcus abyssi (strain GE5 / Orsay) protein is Pyruvate synthase subunit PorD (porD).